The primary structure comprises 739 residues: Vascular cell adhesion protein 1 (739 aa).

An N-terminal signal peptide occupies residues 1 to 24 (MPVKMVAIFGASTVLWILFAVSQA). Ig-like C2-type domains are found at residues 25–111 (FKIE…IQVD), 119–212 (PEIQ…KERE), 223–309 (PKNT…LIVQ), 312–397 (PFTV…KTIQ), 408–506 (EIEI…QTLY), 514–595 (PTIW…VELI), and 601–682 (KDIQ…RSLT). Residues 25-698 (FKIEISPEYK…ENNKDYFSPE (674 aa)) are Extracellular-facing. 5 disulfides stabilise this stretch: Cys-47–Cys-95, Cys-52–Cys-99, Cys-137–Cys-195, Cys-246–Cys-291, and Cys-335–Cys-383. A glycan (N-linked (GlcNAc...) asparagine) is linked at Asn-273. Asn-424, Asn-531, Asn-561, and Asn-650 each carry an N-linked (GlcNAc...) asparagine glycan. An intrachain disulfide couples Cys-534 to Cys-579. A helical membrane pass occupies residues 699–720 (LLALYFASSLVIPAIGMIIYFA). Residues 721–739 (RKANMKGSYSLVEAQKSKV) lie on the Cytoplasmic side of the membrane.

Binds to ECMV-D capsid proteins and acts as a receptor for this virus. Post-translationally, cleaved by the metalloproteinase ADAM17 to generate the soluble form. In terms of processing, sialoglycoprotein. Ubiquitinated by TRIM65 via 'Lys-48'-linked ubiquitination; leading to proteasomal degradation. In terms of tissue distribution, expressed in aortic endothelial cells, with low expression in the descending thoracic aorta and the outer curvature of the aortic arch, where pulsatory shear stress exists, and high in the inner curvature of the aortic arch, where oscillatory shear stress prevails (at protein level). Expressed on inflamed vascular endothelium, as well as on macrophage-like and dendritic cell types in both normal and inflamed tissue.

It is found in the cell membrane. Its subcellular location is the secreted. In terms of biological role, cell adhesion glycoprotein predominantly expressed on the surface of endothelial cells that plays an important role in immune surveillance and inflammation. Acts as a major regulator of leukocyte adhesion to the endothelium through interaction with different types of integrins. During inflammatory responses, binds ligands on the surface of activated endothelial cells to initiate the activation of calcium channels and the plasma membrane-associated small GTPase RAC1 leading to leukocyte transendothelial migration. Also serves as a quality-control checkpoint for entry into bone marrow by providing a 'don't-eat-me' stamping in the context of major histocompatibility complex (MHC) class-I presentation. The sequence is that of Vascular cell adhesion protein 1 (Vcam1) from Rattus norvegicus (Rat).